A 295-amino-acid polypeptide reads, in one-letter code: Protease HtpX (295 aa).

A run of 2 helical transmembrane segments spans residues 4-24 and 42-62; these read ILLF…TLSL and QLLI…LFIS. H147 serves as a coordination point for Zn(2+). E148 is a catalytic residue. Position 151 (H151) interacts with Zn(2+). 2 consecutive transmembrane segments (helical) span residues 158-178 and 199-219; these read VTLA…ARII and VATI…VMWF. Residue E224 participates in Zn(2+) binding.

Belongs to the peptidase M48B family. Zn(2+) is required as a cofactor.

It localises to the cell inner membrane. This chain is Protease HtpX, found in Pseudomonas fluorescens (strain ATCC BAA-477 / NRRL B-23932 / Pf-5).